The sequence spans 930 residues: Isoleucine--tRNA ligase (930 aa).

The 'HIGH' region signature appears at 57–67; the sequence is PYANGHLHLGH. Glu-555 provides a ligand contact to L-isoleucyl-5'-AMP. The 'KMSKS' region signature appears at 596 to 600; the sequence is KMSKS. An ATP-binding site is contributed by Lys-599. Zn(2+)-binding residues include Cys-896, Cys-899, Cys-916, and Cys-919.

This sequence belongs to the class-I aminoacyl-tRNA synthetase family. IleS type 1 subfamily. In terms of assembly, monomer. The cofactor is Zn(2+).

It is found in the cytoplasm. The catalysed reaction is tRNA(Ile) + L-isoleucine + ATP = L-isoleucyl-tRNA(Ile) + AMP + diphosphate. Functionally, catalyzes the attachment of isoleucine to tRNA(Ile). As IleRS can inadvertently accommodate and process structurally similar amino acids such as valine, to avoid such errors it has two additional distinct tRNA(Ile)-dependent editing activities. One activity is designated as 'pretransfer' editing and involves the hydrolysis of activated Val-AMP. The other activity is designated 'posttransfer' editing and involves deacylation of mischarged Val-tRNA(Ile). The polypeptide is Isoleucine--tRNA ligase (Moorella thermoacetica (strain ATCC 39073 / JCM 9320)).